Here is a 66-residue protein sequence, read N- to C-terminus: Large ribosomal subunit protein bL31 (66 aa).

Zn(2+) contacts are provided by cysteine 16, cysteine 18, cysteine 36, and cysteine 39.

It belongs to the bacterial ribosomal protein bL31 family. Type A subfamily. As to quaternary structure, part of the 50S ribosomal subunit. The cofactor is Zn(2+).

Binds the 23S rRNA. The polypeptide is Large ribosomal subunit protein bL31 (Moorella thermoacetica (strain ATCC 39073 / JCM 9320)).